Reading from the N-terminus, the 547-residue chain is MTSSPVTPSAVDDAPDWPAAFVRRYLDAGHWQDQSFAEALATSAARHPRRIALCDDDQRLSYADLLQRCRRLAAGLRQAGLAHGDTVVLHLPNGIAFVETCFALFQLGVRPVLALPAHRQHEISGFCRFAEAKAYIGAERIDGFDPRPMARELLASGACRMALIHGEAEAPLQALAPLYQADALEDCAARAEDIACFQLSGGTTGTPKLIPRRHREYLYNVRASAEVCGFDEHTVYLTGLPMAHNFTLCCPGVIGTLLASGRVVVSQRADPEHCFALIARERVTHTALVPPLAMLWLDAQESRRADLSSLRLLQVGGSRLGSSAAQRVEPVLGCQLQQVLGMAEGLICYTRLDDPPERVLHTQGRPLSPDDEVRVVDAEGREVGPGEVGELTVRGPYTIRGYYRLPEHNAKAFSADGFYRTGDRVSRDKDGYLVVEGRDKDQINRGGEKIAAEEVENLLIAHPQVHDATVVAMPDSLLGERTCAFVIPRQPAPSALKLKQYLHACGLAAFKVPDRIELVPAFPQTGIGKISKKDLRERLRRELEARA.

It belongs to the ATP-dependent AMP-binding enzyme family.

It carries out the reaction salicylate + holo-[ACP] + ATP = salicyl-[ACP] + AMP + diphosphate. It participates in siderophore biosynthesis. It functions in the pathway antifungal biosynthesis. Functionally, involved in the biosynthesis of the siderophore pyochelin. Specifically adenylates salicylate and loads it onto the holo form of PchE via a thioester linkage to the phosphopanthetheine moiety. Is also involved in the synthesis of the antifungal antibiotic dihydroaeruginoic acid (Dha or hydroxyphenyl-thiazolinyl-carboxylate), a precursor of pyochelin. The polypeptide is Pyochelin synthase PchD (Pseudomonas aeruginosa (strain ATCC 15692 / DSM 22644 / CIP 104116 / JCM 14847 / LMG 12228 / 1C / PRS 101 / PAO1)).